The sequence spans 28 residues: Morintide mO6 (28 aa).

A Chitin-binding type-1 domain is found at 1 to 28 (NGLCCSQYGFCGTTSAYCSRANGCQSNC). 2 disulfides stabilise this stretch: C4–C18 and C24–C28.

Seeds (at protein level).

Chitin-binding protein which functions in defense against chitin-containing fungal pathogens. The sequence is that of Morintide mO6 from Moringa oleifera (Horseradish tree).